Here is a 1105-residue protein sequence, read N- to C-terminus: MKRSLGSNSSNNSGSGSNKKSKKNNNPSNQKTLGAAWGAASSRSSFRSSPFSDFGSYMEVKNRKLQNQFETEASAASRGVSGSEKLIFQGVSIFVDGFTIPSHQELKGYMMKYGGRFENYFSRRSVTHIICSNLPDSKVKNLRTFSRGLPVVKPTWIVDSISANRLLGWVPYQLDQLNDTQPKLSAFFAPRSHLTPQMASPVTSFQPDTGYSEAEEGSSIRADDSEEARDHIDDEIDGVYIENTTPELTEQTGTGDLKSSEMNAEGLGNYDIEEKEVSSELQSTTNLHSTSDNKSVHANGKNGGKSIATAAGSSTRRHSTLEDPNFVENYFKNSRLHFIGTWRNRYRKRFHGSSNGLKWADSGQNTAEMAKKSTIIHIDLDCFFVSVVIKNRLELHDKPVAVCHSDNPKGTAEISSANYPARAYGVKAGMFVRHAKDLCPQLVIVPYNFEAYEEVADQFYDILHRHCRKVQALSCDEAFLDVSDLSDVETEVLASTIRNEILETTGCSASAGIGGTMLMARLATRVAKPAGQLYISAEKVEEFLDQLPVGTLPGVGSVLKEKLVKQNIQTCGQLRLISKDSLQKDFGVKTGEMLWSYSRGLDLRSVTAVQESKSIGAEVNWGVRFRDQQDVFILVQHFLQCLCKEVSLRLQGCEMIGRTFTLKIKKRKKDAEEPTKYMGCGDCDNLSRSITVPAATDDIEVLQRISKKLFGSFCLDVKEVRGVGLQVSKLDSADPSNKGSRTLKSWLSSAPAVVQIEQDDNVFAAKVRENSDCNRPVTGGVSRLRESNSEESSIQSGDTNSSLPPMCYLDMEVLENLPPELLSELDGTYGGKLFELIEKKRGKRRINCNSPHVSLDGTAASIKELKSLSVKIHGLSTSGEKEYKEPYVPHPSIARTSNQHTIEMTDLLPSSLSQVDVSVLQELPEELRADVLGAFPSHRRQQSSSDVPKETCKKQDEEPIDLKGTENEIGLSFSSLWFGNPPLWTEKFKVSGNCTMEKLSAIYFKVAQSRPMLSLVLQHAISEMSSFPDAASASDLDKAIYDVCELLKQYINLKVGGDIEEIYLCFRLLKRLAARSQLFLQVYEILSPFIQASISEHYGGSLSIP.

Positions 1–50 are disordered; it reads MKRSLGSNSSNNSGSGSNKKSKKNNNPSNQKTLGAAWGAASSRSSFRSSP. The BRCT domain maps to 83 to 174; that stretch reads SEKLIFQGVS…RLLGWVPYQL (92 aa). 3 stretches are compositionally biased toward polar residues: residues 198–209, 242–254, and 279–293; these read MASPVTSFQPDT, ENTTPELTEQTGT, and SELQSTTNLHSTSDN. Disordered stretches follow at residues 198–263 and 276–319; these read MASP…SEMN and EVSS…RRHS. The segment at 330-340 is interaction with target DNA; sequence YFKNSRLHFIG. Residues Arg335, 379-383, 416-422, and Asp476 contribute to the dCTP site; these read DLDCF and SANYPAR. Positions 375-556 constitute a UmuC domain; that stretch reads IIHIDLDCFF…LPVGTLPGVG (182 aa). Asp379 contributes to the Mn(2+) binding site. Residues Asp476 and Glu477 each coordinate Mn(2+). Glu477 is a catalytic residue. Interaction with target DNA stretches follow at residues 556-559 and 612-620; these read GSVL and SKSIGAEVN. Disordered regions lie at residues 775 to 803 and 934 to 959; these read RPVTGGVSRLRESNSEESSIQSGDTNSSL and AFPSHRRQQSSSDVPKETCKKQDEEP. Residues 794 to 803 show a composition bias toward polar residues; sequence IQSGDTNSSL. Positions 947-959 are enriched in basic and acidic residues; the sequence is VPKETCKKQDEEP. The Nuclear localization signal signature appears at 953 to 961; sequence KKQDEEPID. The protein interaction domain; mediates interaction with DNA polymerase zeta stretch occupies residues 1021-1103; it reads ISEMSSFPDA…ISEHYGGSLS (83 aa).

This sequence belongs to the DNA polymerase type-Y family. As to quaternary structure, monomer. Mn(2+) is required as a cofactor. Mg(2+) serves as cofactor.

The protein localises to the nucleus. Its function is as follows. Deoxycytidyl transferase involved in DNA repair and translesion synthesis (TLS). Transfers a dCMP residue from dCTP to the 3'-end of a DNA primer in a template-dependent reaction. Also mediates the insertion of dTMP or dGMP when the opposite base is G, and, with a low efficiency, dGMP insertions opposite G, T, and C, dAMP insertions opposite G, A, and T, and dTMP insertion opposite A. May assist in the first step in the bypass of abasic lesions by the insertion of a nucleotide opposite the lesion. Required for normal induction of mutations by physical and chemical agents (e.g. UV and gamma ray), mostly via G to T transversions, and of spontaneous mutations in somatic cells. Confers resistance to ultraviolet-B (UV-B) and various DNA cross-linkers (e.g. mitomycin C MMC and cisplatin). Promotes stem growth. The chain is DNA repair protein REV1 (REV1) from Arabidopsis thaliana (Mouse-ear cress).